Here is a 358-residue protein sequence, read N- to C-terminus: Homoserine O-acetyltransferase (358 aa).

The region spanning 41–343 (NAVLICHALT…DYGHDAFLVD (303 aa)) is the AB hydrolase-1 domain. Ser143 functions as the Nucleophile in the catalytic mechanism. Substrate is bound at residue Arg212. Residues Asp304 and His337 contribute to the active site. Asp338 is a binding site for substrate.

In terms of assembly, homodimer.

It is found in the cytoplasm. The catalysed reaction is L-homoserine + acetyl-CoA = O-acetyl-L-homoserine + CoA. It functions in the pathway amino-acid biosynthesis; L-methionine biosynthesis via de novo pathway; O-acetyl-L-homoserine from L-homoserine: step 1/1. Functionally, transfers an acetyl group from acetyl-CoA to L-homoserine, forming acetyl-L-homoserine. Utilizes a ping-pong kinetic mechanism in which the acetyl group of acetyl-CoA is initially transferred to the enzyme to form an acetyl-enzyme intermediate before subsequent transfer to homoserine to form the final product, O-acetylhomoserine. In Haemophilus influenzae (strain ATCC 51907 / DSM 11121 / KW20 / Rd), this protein is Homoserine O-acetyltransferase.